A 592-amino-acid polypeptide reads, in one-letter code: UvrABC system protein C (592 aa).

The GIY-YIG domain maps to 14 to 91; it reads KKPGCYLWKN…IKKHKPRYNI (78 aa). Residues 197 to 232 form the UVR domain; that stretch reads DQVLKDLKEKESIASEKFDFEQAKKYLDLQKAINLI.

Belongs to the UvrC family. In terms of assembly, interacts with UvrB in an incision complex.

The protein resides in the cytoplasm. Its function is as follows. The UvrABC repair system catalyzes the recognition and processing of DNA lesions. UvrC both incises the 5' and 3' sides of the lesion. The N-terminal half is responsible for the 3' incision and the C-terminal half is responsible for the 5' incision. The protein is UvrABC system protein C of Mycoplasmoides gallisepticum (strain R(low / passage 15 / clone 2)) (Mycoplasma gallisepticum).